The chain runs to 413 residues: Arginine biosynthesis bifunctional protein ArgJ (413 aa).

6 residues coordinate substrate: threonine 158, lysine 184, threonine 195, glutamate 285, asparagine 408, and serine 413. Threonine 195 acts as the Nucleophile in catalysis.

Belongs to the ArgJ family. As to quaternary structure, heterotetramer of two alpha and two beta chains.

The protein localises to the cytoplasm. It catalyses the reaction N(2)-acetyl-L-ornithine + L-glutamate = N-acetyl-L-glutamate + L-ornithine. It carries out the reaction L-glutamate + acetyl-CoA = N-acetyl-L-glutamate + CoA + H(+). It participates in amino-acid biosynthesis; L-arginine biosynthesis; L-ornithine and N-acetyl-L-glutamate from L-glutamate and N(2)-acetyl-L-ornithine (cyclic): step 1/1. It functions in the pathway amino-acid biosynthesis; L-arginine biosynthesis; N(2)-acetyl-L-ornithine from L-glutamate: step 1/4. Catalyzes two activities which are involved in the cyclic version of arginine biosynthesis: the synthesis of N-acetylglutamate from glutamate and acetyl-CoA as the acetyl donor, and of ornithine by transacetylation between N(2)-acetylornithine and glutamate. The sequence is that of Arginine biosynthesis bifunctional protein ArgJ from Mesorhizobium japonicum (strain LMG 29417 / CECT 9101 / MAFF 303099) (Mesorhizobium loti (strain MAFF 303099)).